The chain runs to 1188 residues: Phospholipid-transporting ATPase IB (1188 aa).

The Cytoplasmic segment spans residues 1 to 94 (MLNGAGLDKA…PRFLYEQIRR (94 aa)). T45 is subject to Phosphothreonine. Residues 95 to 115 (AANAFFLFIALLQQIPDVSPT) traverse the membrane as a helical segment. Residues 116 to 119 (GRYT) lie on the Extracellular side of the membrane. A helical membrane pass occupies residues 120–140 (TLVPLIIILTIAGIKEIVEDF). Residues 141 to 316 (KRHKADNAVN…SNVEKVTNVQ (176 aa)) are Cytoplasmic-facing. A helical membrane pass occupies residues 317–337 (ILVLFGILLVMALVSSAGALY). Topologically, residues 338–364 (WNRSHGEKNWYIKKMDTTSDNFGYNLL) are extracellular. The helical transmembrane segment at 365-385 (TFIILYNNLIPISLLVTLEVV) threads the bilayer. Topologically, residues 386-887 (KYTQALFINW…CILYCFYKNV (502 aa)) are cytoplasmic. D428 functions as the 4-aspartylphosphate intermediate in the catalytic mechanism. ATP is bound by residues D428, K429, T430, E528, F569, K592, R625, T705, G706, D707, R795, and K801. D428 is a binding site for Mg(2+). Residue T430 participates in Mg(2+) binding. D821 contributes to the Mg(2+) binding site. 2 residues coordinate ATP: N824 and D825. A Mg(2+)-binding site is contributed by D825. The chain crosses the membrane as a helical span at residues 888 to 908 (VLYIIELWFAFVNGFSGQILF). Over 909–910 (ER) the chain is Extracellular. The helical transmembrane segment at 911-931 (WCIGLYNVIFTALPPFTLGIF) threads the bilayer. The Cytoplasmic segment spans residues 932-959 (ERSCTQESMLRFPQLYKITQNGEGFNTK). A helical membrane pass occupies residues 960-980 (VFWGHCINALVHSLILFWFPM). The Extracellular portion of the chain corresponds to 981 to 997 (KALEHDTVLTSGHATDY). A helical transmembrane segment spans residues 998 to 1018 (LFVGNIVYTYVVVTVCLKAGL). Residues 1019-1028 (ETTAWTKFSH) lie on the Cytoplasmic side of the membrane. A helical membrane pass occupies residues 1029 to 1049 (LAVWGSMLTWLVFFGIYSTIW). At 1050-1063 (PTIPIAPDMRGQAT) the chain is on the extracellular side. A helical transmembrane segment spans residues 1064-1084 (MVLSSAHFWLGLFLVPTACLI). Topologically, residues 1085–1188 (EDVAWRAAKH…DTTKKKSRKK (104 aa)) are cytoplasmic. Residues 1162–1188 (SQEEHGAVSQEEVIRAYDTTKKKSRKK) form a disordered region. Residues 1163–1182 (QEEHGAVSQEEVIRAYDTTK) show a composition bias toward basic and acidic residues.

This sequence belongs to the cation transport ATPase (P-type) (TC 3.A.3) family. Type IV subfamily. As to quaternary structure, component of a P4-ATPase flippase complex which consists of a catalytic alpha subunit and an accessory beta subunit. Interacts with TMEM30A to form a flippase complex. It depends on Mg(2+) as a cofactor. In terms of tissue distribution, strongly expressed in the brain, cerebellum, retina and testis.

It localises to the membrane. It is found in the golgi apparatus membrane. Its subcellular location is the endosome membrane. The protein resides in the cell membrane. The protein localises to the photoreceptor outer segment membrane. It localises to the photoreceptor inner segment membrane. The enzyme catalyses ATP + H2O + phospholipidSide 1 = ADP + phosphate + phospholipidSide 2.. It catalyses the reaction a 1,2-diacyl-sn-glycero-3-phospho-L-serine(out) + ATP + H2O = a 1,2-diacyl-sn-glycero-3-phospho-L-serine(in) + ADP + phosphate + H(+). The catalysed reaction is a 1,2-diacyl-sn-glycero-3-phosphoethanolamine(in) + ATP + H2O = a 1,2-diacyl-sn-glycero-3-phosphoethanolamine(out) + ADP + phosphate + H(+). Catalytic component of a P4-ATPase flippase complex which catalyzes the hydrolysis of ATP coupled to the transport of aminophospholipids from the outer to the inner leaflet of various membranes and ensures the maintenance of asymmetric distribution of phospholipids. Able to translocate phosphatidylserine, but not phosphatidylcholine. Phospholipid translocation also seems to be implicated in vesicle formation and in uptake of lipid signaling molecules. Reconstituted to liposomes, the ATP8A2:TMEM30A flippase complex predominantly transports phosphatidylserine (PS) and to a lesser extent phosphatidylethanolamine (PE). Phospholipid translocation is not associated with a countertransport of an inorganic ion or other charged substrate from the cytoplasmic side toward the exoplasm in connection with the phosphorylation from ATP. ATP8A2:TMEM30A may be involved in regulation of neurite outgrowth. Proposed to function in the generation and maintenance of phospholipid asymmetry in photoreceptor disk membranes and neuronal axon membranes. May be involved in vesicle trafficking in neuronal cells. Required for normal visual and auditory function; involved in photoreceptor and inner ear spiral ganglion cell survival. In Homo sapiens (Human), this protein is Phospholipid-transporting ATPase IB.